The primary structure comprises 126 residues: Aspartate 1-decarboxylase (126 aa).

S25 (schiff-base intermediate with substrate; via pyruvic acid) is an active-site residue. S25 is subject to Pyruvic acid (Ser). Position 57 (T57) interacts with substrate. The Proton donor role is filled by Y58. 73–75 (GAA) contributes to the substrate binding site.

Belongs to the PanD family. Heterooctamer of four alpha and four beta subunits. Requires pyruvate as cofactor. Is synthesized initially as an inactive proenzyme, which is activated by self-cleavage at a specific serine bond to produce a beta-subunit with a hydroxyl group at its C-terminus and an alpha-subunit with a pyruvoyl group at its N-terminus.

It localises to the cytoplasm. The enzyme catalyses L-aspartate + H(+) = beta-alanine + CO2. It functions in the pathway cofactor biosynthesis; (R)-pantothenate biosynthesis; beta-alanine from L-aspartate: step 1/1. Its function is as follows. Catalyzes the pyruvoyl-dependent decarboxylation of aspartate to produce beta-alanine. The protein is Aspartate 1-decarboxylase of Stutzerimonas stutzeri (strain A1501) (Pseudomonas stutzeri).